We begin with the raw amino-acid sequence, 723 residues long: Catalase-peroxidase (723 aa).

The segment at residues 97-225 (WHAAGSYRVT…LAAVQMGLIY (129 aa)) is a cross-link (tryptophyl-tyrosyl-methioninium (Trp-Tyr) (with M-251)). H98 serves as the catalytic Proton acceptor. A cross-link (tryptophyl-tyrosyl-methioninium (Tyr-Met) (with W-97)) is located at residues 225–251 (YVNPEGVNGKSDPLATAAQMRETFARM). H266 lines the heme b pocket.

This sequence belongs to the peroxidase family. Peroxidase/catalase subfamily. In terms of assembly, homodimer or homotetramer. Requires heme b as cofactor. Post-translationally, formation of the three residue Trp-Tyr-Met cross-link is important for the catalase, but not the peroxidase activity of the enzyme.

It carries out the reaction H2O2 + AH2 = A + 2 H2O. The enzyme catalyses 2 H2O2 = O2 + 2 H2O. Bifunctional enzyme with both catalase and broad-spectrum peroxidase activity. The protein is Catalase-peroxidase of Agrobacterium fabrum (strain C58 / ATCC 33970) (Agrobacterium tumefaciens (strain C58)).